The chain runs to 558 residues: Laccase-4 (558 aa).

An N-terminal signal peptide occupies residues 1-24 (MGSHMVWFLFLVSFFSVFPAPSES). 2 consecutive Plastocyanin-like domains span residues 32–148 (NVVM…PKRG) and 158–308 (NEKV…YSGT). 2 N-linked (GlcNAc...) asparagine glycosylation sites follow: Asn-37 and Asn-78. His-82 and His-84 together coordinate Cu cation. Asn-114 carries an N-linked (GlcNAc...) asparagine glycan. 2 residues coordinate Cu cation: His-127 and His-129. Asn-187, Asn-296, Asn-323, Asn-330, Asn-373, Asn-383, Asn-400, Asn-418, and Asn-441 each carry an N-linked (GlcNAc...) asparagine glycan. The Plastocyanin-like 3 domain occupies 408–542 (DFPKNPPHVF…KMAFLVENGK (135 aa)). Positions 459, 462, and 464 each coordinate Cu cation. N-linked (GlcNAc...) asparagine glycosylation is present at Asn-479. His-521, Cys-522, His-523, and His-527 together coordinate Cu cation. Asn-545 carries N-linked (GlcNAc...) asparagine glycosylation.

The protein belongs to the multicopper oxidase family. The cofactor is Cu cation. In terms of tissue distribution, ubiquitous, with higher levels in the inflorescence stem.

Its subcellular location is the secreted. It localises to the extracellular space. The protein localises to the apoplast. The catalysed reaction is 4 hydroquinone + O2 = 4 benzosemiquinone + 2 H2O. Its function is as follows. Lignin degradation and detoxification of lignin-derived products. Required for secondary xylem cell wall lignification. The polypeptide is Laccase-4 (IRX12) (Arabidopsis thaliana (Mouse-ear cress)).